A 126-amino-acid polypeptide reads, in one-letter code: Fluoride-specific ion channel FluC 2 (126 aa).

Transmembrane regions (helical) follow at residues M7 to I27, L37 to F57, Y65 to S85, and A101 to G121. Na(+) is bound by residues G79 and T82.

Belongs to the fluoride channel Fluc/FEX (TC 1.A.43) family.

The protein localises to the cell inner membrane. The enzyme catalyses fluoride(in) = fluoride(out). With respect to regulation, na(+) is not transported, but it plays an essential structural role and its presence is essential for fluoride channel function. Its function is as follows. Fluoride-specific ion channel. Important for reducing fluoride concentration in the cell, thus reducing its toxicity. This chain is Fluoride-specific ion channel FluC 2, found in Yersinia pseudotuberculosis serotype I (strain IP32953).